The chain runs to 190 residues: Xanthine phosphoribosyltransferase (190 aa).

Residues leucine 20 and asparagine 27 each coordinate xanthine. Alanine 128–alanine 132 is a binding site for 5-phospho-alpha-D-ribose 1-diphosphate. Lysine 156 serves as a coordination point for xanthine.

The protein belongs to the purine/pyrimidine phosphoribosyltransferase family. Xpt subfamily. As to quaternary structure, homodimer.

The protein resides in the cytoplasm. The enzyme catalyses XMP + diphosphate = xanthine + 5-phospho-alpha-D-ribose 1-diphosphate. Its pathway is purine metabolism; XMP biosynthesis via salvage pathway; XMP from xanthine: step 1/1. Functionally, converts the preformed base xanthine, a product of nucleic acid breakdown, to xanthosine 5'-monophosphate (XMP), so it can be reused for RNA or DNA synthesis. The chain is Xanthine phosphoribosyltransferase from Ruminiclostridium cellulolyticum (strain ATCC 35319 / DSM 5812 / JCM 6584 / H10) (Clostridium cellulolyticum).